The sequence spans 573 residues: 60 kDa lysophospholipase (573 aa).

The Asparaginase/glutaminase domain maps to 9-355 (RRLLAVYTGG…DVRKELLTKD (347 aa)). Residue Thr-19 is the Acyl-ester intermediate of the active site. The tract at residues 41-350 (TLPMFHDEEH…PGLSLDVRKE (310 aa)) is asparaginase. Substrate-binding positions include 84 to 86 (DSS) and 116 to 117 (TD). ANK repeat units lie at residues 141 to 170 (GAQV…YVIP), 399 to 429 (ALVP…DLGL), 433 to 462 (NGQT…DVNT), 466 to 495 (DGFS…SLST), and 533 to 562 (DGHS…AVGA).

In the N-terminal section; belongs to the asparaginase 1 family. Monomer.

It carries out the reaction a 1-acyl-sn-glycero-3-phosphocholine + H2O = sn-glycerol 3-phosphocholine + a fatty acid + H(+). The catalysed reaction is L-asparagine + H2O = L-aspartate + NH4(+). The enzyme catalyses a 1-O-alkyl-2-acetyl-sn-glycero-3-phosphocholine + H2O = a 1-O-alkyl-sn-glycero-3-phosphocholine + acetate + H(+). It catalyses the reaction 1-hexadecanoyl-sn-glycero-3-phosphocholine + H2O = sn-glycerol 3-phosphocholine + hexadecanoate + H(+). It carries out the reaction 2 1-hexadecanoyl-sn-glycero-3-phosphocholine = 1,2-dihexadecanoyl-sn-glycero-3-phosphocholine + sn-glycerol 3-phosphocholine. The catalysed reaction is 1-octadecanoyl-sn-glycero-3-phosphocholine + H2O = octadecanoate + sn-glycerol 3-phosphocholine + H(+). The enzyme catalyses 1-(9Z-octadecenoyl)-sn-glycero-3-phosphocholine + H2O = sn-glycerol 3-phosphocholine + (9Z)-octadecenoate + H(+). It catalyses the reaction 1-hexadecanoyl-sn-glycero-3-phosphoethanolamine + H2O = sn-glycero-3-phosphoethanolamine + hexadecanoate + H(+). It carries out the reaction 1-(9Z-octadecenoyl)-sn-glycero-3-phosphoethanolamine + H2O = sn-glycero-3-phosphoethanolamine + (9Z)-octadecenoate + H(+). The catalysed reaction is 1-hexadecanoyl-sn-glycero-3-phosphoethanolamine + 1-hexadecanoyl-sn-glycero-3-phosphocholine = 1,2-dihexadecanoyl-sn-glycero-3-phosphoethanolamine + sn-glycerol 3-phosphocholine. The enzyme catalyses 2-(5Z,8Z,11Z,14Z)-eicosatetraenoyl-sn-glycero-3-phosphocholine + H2O = sn-glycerol 3-phosphocholine + (5Z,8Z,11Z,14Z)-eicosatetraenoate + H(+). It catalyses the reaction 2-hexadecanoyl-sn-glycero-3-phosphocholine + H2O = sn-glycerol 3-phosphocholine + hexadecanoate + H(+). It carries out the reaction 2 2-hexadecanoyl-sn-glycero-3-phosphocholine = 1,2-dihexadecanoyl-sn-glycero-3-phosphocholine + sn-glycerol 3-phosphocholine. The catalysed reaction is 1-O-(9Z)-octadecenoyl-2-O-acetyl-sn-glycero-3-phosphocholine + H2O = 2-acetyl-sn-glycero-3-phosphocholine + (9Z)-octadecenoate + H(+). The enzyme catalyses a 1-acyl-sn-glycero-3-phospho-(1D-myo-inositol) + 1-hexadecanoyl-sn-glycero-3-phosphocholine = a 1-acyl-2-hexadecanoyl-sn-glycero-3-phospho-(1D-myo-inositol) + sn-glycerol 3-phosphocholine. It catalyses the reaction 2 2-(5Z,8Z,11Z,14Z)-eicosatetraenoyl-sn-glycero-3-phosphocholine = 1,2-di-(5Z,8Z,11Z,14Z-eicosatetraenoyl)-sn-glycero-3-phosphocholine + sn-glycerol 3-phosphocholine. Functionally, exhibits lysophospholipase, transacylase, PAF acetylhydrolase and asparaginase activities. Can catalyze three types of transacylation reactions: (1) acyl transfer from 1-acyl-sn-glycero-3-phosphocholine (1-acyl-GPC) to the sn-1(3) positions of glycerol and 2-acylglycerol (sn-1 to -1(3) transfer), (2) acyl transfer from 1-acyl-GPC to the sn-2 positions of 1-acyl-GPC, 1-acyl-sn-glycero-3-phosphoethanolamine (1-acyl-GPE), and other lysophospholipids (sn-1 to -2 transfer) and (3) acyl transfer from 2-acyl-GPC to the sn-1 position of 2-acyl-GPC and 2-acyl-GPE (sn-2 to -1 transfer). Mediates the synthesis of 1-arachidonoyl species of phospholipids by transferring the arachidonoyl residue from 2-arachidonoyl lysophospholipid to the sn-1 position of 2-acyl lysophospholipid. The protein is 60 kDa lysophospholipase (ASPG) of Homo sapiens (Human).